The primary structure comprises 438 residues: Glutamate-1-semialdehyde 2,1-aminomutase (438 aa).

N6-(pyridoxal phosphate)lysine is present on Lys274.

The protein belongs to the class-III pyridoxal-phosphate-dependent aminotransferase family. HemL subfamily. As to quaternary structure, homodimer. Requires pyridoxal 5'-phosphate as cofactor.

Its subcellular location is the cytoplasm. The catalysed reaction is (S)-4-amino-5-oxopentanoate = 5-aminolevulinate. Its pathway is porphyrin-containing compound metabolism; protoporphyrin-IX biosynthesis; 5-aminolevulinate from L-glutamyl-tRNA(Glu): step 2/2. The sequence is that of Glutamate-1-semialdehyde 2,1-aminomutase from Salinibacter ruber (strain DSM 13855 / M31).